Reading from the N-terminus, the 408-residue chain is LL-diaminopimelate aminotransferase (408 aa).

The substrate site is built by Tyr-15 and Gly-42. Residues Tyr-72, 108–109 (SK), Tyr-132, Asn-187, Tyr-218, and 246–248 (SFS) contribute to the pyridoxal 5'-phosphate site. Residues Lys-109, Tyr-132, and Asn-187 each contribute to the substrate site. Lys-249 carries the post-translational modification N6-(pyridoxal phosphate)lysine. Positions 257 and 292 each coordinate pyridoxal 5'-phosphate. Residues Asn-292 and Arg-388 each contribute to the substrate site.

This sequence belongs to the class-I pyridoxal-phosphate-dependent aminotransferase family. LL-diaminopimelate aminotransferase subfamily. As to quaternary structure, homodimer. The cofactor is pyridoxal 5'-phosphate.

The enzyme catalyses (2S,6S)-2,6-diaminopimelate + 2-oxoglutarate = (S)-2,3,4,5-tetrahydrodipicolinate + L-glutamate + H2O + H(+). The protein operates within amino-acid biosynthesis; L-lysine biosynthesis via DAP pathway; LL-2,6-diaminopimelate from (S)-tetrahydrodipicolinate (aminotransferase route): step 1/1. In terms of biological role, involved in the synthesis of meso-diaminopimelate (m-DAP or DL-DAP), required for both lysine and peptidoglycan biosynthesis. Catalyzes the direct conversion of tetrahydrodipicolinate to LL-diaminopimelate. This Prochlorococcus marinus (strain MIT 9303) protein is LL-diaminopimelate aminotransferase.